A 318-amino-acid chain; its full sequence is Cobalamin biosynthesis protein CobD (318 aa).

Transmembrane regions (helical) follow at residues 56–76, 78–98, 153–173, 204–224, and 298–318; these read VLWL…LWLM, EINP…LLAG, VDGV…LAMA, LANW…AWLI, and MMAS…LVGI.

Belongs to the CobD/CbiB family.

It is found in the cell membrane. It functions in the pathway cofactor biosynthesis; adenosylcobalamin biosynthesis. Its function is as follows. Converts cobyric acid to cobinamide by the addition of aminopropanol on the F carboxylic group. This is Cobalamin biosynthesis protein CobD from Yersinia enterocolitica serotype O:8 / biotype 1B (strain NCTC 13174 / 8081).